Reading from the N-terminus, the 71-residue chain is SPI-2 type 3 secretion system needle filament protein (71 aa).

It belongs to the SctF family. In terms of assembly, the core secretion machinery of the T3SS is composed of approximately 20 different proteins, including cytoplasmic components, a base, an export apparatus and a needle. This subunit polymerizes and forms the helical needle filament.

Its subcellular location is the secreted. The protein localises to the cell surface. In terms of biological role, component of the type III secretion system (T3SS), also called injectisome, which is used to inject bacterial effector proteins into eukaryotic host cells. SsaG/SctF2 forms the external needle filament that protrudes from the bacterial surface. Functionally, during infection, can induce innate immune responses. The needle proteins interact with host TLR2 or TLR4, and induce signaling by NF-kappa-B and/or AP-1. This activation is MyD88 dependent and results in increased expression of cytokines, including TNF-alpha, IL-6 and IL-8. This is SPI-2 type 3 secretion system needle filament protein from Salmonella typhimurium (strain LT2 / SGSC1412 / ATCC 700720).